Reading from the N-terminus, the 234-residue chain is UPF0173 metal-dependent hydrolase Smed_0942 (234 aa).

Belongs to the UPF0173 family.

This Sinorhizobium medicae (strain WSM419) (Ensifer medicae) protein is UPF0173 metal-dependent hydrolase Smed_0942.